The chain runs to 418 residues: UDP-N-acetylglucosamine 1-carboxyvinyltransferase (418 aa).

22–23 (KN) lines the phosphoenolpyruvate pocket. R91 provides a ligand contact to UDP-N-acetyl-alpha-D-glucosamine. The active-site Proton donor is C115. 2-(S-cysteinyl)pyruvic acid O-phosphothioketal is present on C115. Residues D305 and I327 each coordinate UDP-N-acetyl-alpha-D-glucosamine.

This sequence belongs to the EPSP synthase family. MurA subfamily.

Its subcellular location is the cytoplasm. The enzyme catalyses phosphoenolpyruvate + UDP-N-acetyl-alpha-D-glucosamine = UDP-N-acetyl-3-O-(1-carboxyvinyl)-alpha-D-glucosamine + phosphate. Its pathway is cell wall biogenesis; peptidoglycan biosynthesis. Functionally, cell wall formation. Adds enolpyruvyl to UDP-N-acetylglucosamine. This chain is UDP-N-acetylglucosamine 1-carboxyvinyltransferase, found in Aeromonas hydrophila subsp. hydrophila (strain ATCC 7966 / DSM 30187 / BCRC 13018 / CCUG 14551 / JCM 1027 / KCTC 2358 / NCIMB 9240 / NCTC 8049).